A 311-amino-acid chain; its full sequence is 4-diphosphocytidyl-2-C-methyl-D-erythritol kinase (311 aa).

The active site involves K16. 100 to 110 (PIGAGLAGGSS) is a binding site for ATP. Residue D142 is part of the active site.

Belongs to the GHMP kinase family. IspE subfamily.

It catalyses the reaction 4-CDP-2-C-methyl-D-erythritol + ATP = 4-CDP-2-C-methyl-D-erythritol 2-phosphate + ADP + H(+). Its pathway is isoprenoid biosynthesis; isopentenyl diphosphate biosynthesis via DXP pathway; isopentenyl diphosphate from 1-deoxy-D-xylulose 5-phosphate: step 3/6. Functionally, catalyzes the phosphorylation of the position 2 hydroxy group of 4-diphosphocytidyl-2C-methyl-D-erythritol. This is 4-diphosphocytidyl-2-C-methyl-D-erythritol kinase from Prochlorococcus marinus (strain MIT 9301).